The primary structure comprises 764 residues: MKTAGEPDRRRQRRQVRTGRFSCAWWSTSVMLFFSLPEGNCMKESLPRVKLGYKDLIHSRSVVPFTGSSEGQHFQTVLLDEERSRLLLGAKDHVYLLDPDNINKHPKKLSWPASRDRVEMCILAGKNPLTECANFIRVLHSYNRTHVYACGTGAFHPTCAFLEIKGHKEDRWLLLHSNTMESGRMKCPFDPNQPFASVLTDQYLYAGTASDFLGKDSTFTRSLGPPPHQQYIRTDISEDYWINEGKFISAHPISDTYNPDDDKIYFFFREASRDGSTTDKSVLSRVARICRNDVGGLRSLTNKWTTFLKARLVCSIPGPDGVDTHFDELQDIFLLPSRDEKNPMVYGVFTTTSSIFKGSAVCVYTMEDIRAAFNGPYAHKEGPDHRWVEYEGRIPYPRPGTCPSRTYDPHIKTTKDFPDEVISFIRLHPLMYQSVHPMTGRPIFTRINTEYRLTQIIVDRVAAEDGQYAVMFLGTDMGSVLKVVSITQENWSSEEIILEELQVFKNPSPILNMEVSSKQQQLFVGGSDGLVQVSLHRCQIYGQGCAECCLARDPYCAWDGTQCSRYIPASKRRARRQDIKHGDPSSHCWDTEDVLGRNVEEKVLYGVESNSSFLECVSKSQQALIRWFVLKPGVDHRQEIKPDERVLITDRGLLIRWLQRGDAGSYFCTSQEHRFTRTLLHVSLHILDRGQINAHQPAIRESSENPAVTEPRQRYKDYLRMLSGPARSLDEYCETMWHREKKQKQKGKWKHVQELRKSRNRRHH.

The first 41 residues, Met1–Cys41, serve as a signal peptide directing secretion. The Sema domain occupies Arg48–Leu535. A disulfide bridge links Cys121 with Cys132. Asn143 carries N-linked (GlcNAc...) asparagine glycosylation. Disulfide bonds link Cys150/Cys159, Cys290/Cys402, and Cys314/Cys362. Residue Asn490 is glycosylated (N-linked (GlcNAc...) asparagine). Residues Cys538 and Cys556 are joined by a disulfide bond. Asn610 carries N-linked (GlcNAc...) asparagine glycosylation. Residues Gly661 to Glu740 form the Ig-like C2-type domain. An intrachain disulfide couples Cys668 to Cys733. The tract at residues Gln743–His764 is disordered.

The protein belongs to the semaphorin family.

It is found in the secreted. May play a role in the guidance of several axon pathways. This chain is Semaphorin-3D (sema3d), found in Danio rerio (Zebrafish).